The primary structure comprises 143 residues: Agaricus bisporus lectin (143 aa).

Beta-D-Gal-(1-&gt;3)-alpha-D-GalNAc-binding residues include Ala29, Ser48, Gly49, and Asn73. Positions 82, 103, and 114 each coordinate N-acetyl-beta-D-glucosamine.

This sequence belongs to the fungal fruit body lectin family. As to quaternary structure, homotetramer.

In terms of biological role, lectin that recognizes O-linked galactose-beta-1,3-N-acetylgalactosamine, a disaccharide (Thomsen-Friedenreich antigen or T-disaccharide), present on cell surface glycoproteins. Can also bind galactose-beta-1,3-N-acetylglucosamine. Does not bind monosaccharides. Can be internalized by clathrin-coated vesicles after binding to surface glycoproteins. After internalization it inhibits nuclear import of nuclear localization signal dependent proteins. Inhibits proliferation of malignant cells without cytotoxicity for normal cells. The chain is Agaricus bisporus lectin from Agaricus bisporus (White button mushroom).